A 381-amino-acid chain; its full sequence is MSKRDYYDVLGVSKGASADEIKKAYRGKAKELHPDRNKDNPDAESLFKEVNEAYEVLKDAEKKAAYDRFGHAAFEGGMGGGQRPGGGFGSGDFSSAFSDVFEDLFGDFMGGQRGGGGRRAARGSDLRYNLRVTLEEAFSGLQKTINVPTAVACSSCEGTGAEGGVEPTTCPTCSGMGKVRAQQGFFTVERTCPTCSGLGQIIKNPCKSCRGQGRVEKDRALSVNIPAGVETGTRIRLAGEGEAGMRGGPPGDLYIFVEVAKHELFERDGVNLYCRVPVSMAKAALGGAIEVPTIDGGRGRVQVPAGSQSGRQMRLRSKGMPALRGGGIGDMFIELAVETPVNLTSKQKDLLREFDELSEDNNPETKSFFSSVKSFWDGMKG.

Residues 5–70 (DYYDVLGVSK…EKKAAYDRFG (66 aa)) form the J domain. The CR-type zinc finger occupies 140–218 (GLQKTINVPT…CRGQGRVEKD (79 aa)). Zn(2+) contacts are provided by Cys-153, Cys-156, Cys-170, Cys-173, Cys-192, Cys-195, Cys-206, and Cys-209. CXXCXGXG motif repeat units follow at residues 153–160 (CSSCEGTG), 170–177 (CPTCSGMG), 192–199 (CPTCSGLG), and 206–213 (CKSCRGQG).

The protein belongs to the DnaJ family. Homodimer. The cofactor is Zn(2+).

It is found in the cytoplasm. Participates actively in the response to hyperosmotic and heat shock by preventing the aggregation of stress-denatured proteins and by disaggregating proteins, also in an autonomous, DnaK-independent fashion. Unfolded proteins bind initially to DnaJ; upon interaction with the DnaJ-bound protein, DnaK hydrolyzes its bound ATP, resulting in the formation of a stable complex. GrpE releases ADP from DnaK; ATP binding to DnaK triggers the release of the substrate protein, thus completing the reaction cycle. Several rounds of ATP-dependent interactions between DnaJ, DnaK and GrpE are required for fully efficient folding. Also involved, together with DnaK and GrpE, in the DNA replication of plasmids through activation of initiation proteins. This chain is Chaperone protein DnaJ, found in Ruegeria pomeroyi (strain ATCC 700808 / DSM 15171 / DSS-3) (Silicibacter pomeroyi).